The sequence spans 390 residues: Multidrug export protein EmrA (390 aa).

At 1–24 the chain is on the cytoplasmic side; it reads MSANAETQTPQQPVKKSGKRKRLL. Residues 25–45 traverse the membrane as a helical segment; it reads LLLTLLFIIIAVAIGIYWFLV. Residues 46–390 lie on the Periplasmic side of the membrane; sequence LRHFEETDDA…IDDIVKANAG (345 aa). Residues 120–180 adopt a coiled-coil conformation; it reads INSKQLQANI…QAQLDVAIQQ (61 aa).

This sequence belongs to the membrane fusion protein (MFP) (TC 8.A.1) family. Homodimer and homotrimer. Part of the tripartite efflux system EmrAB-TolC, which is composed of an inner membrane transporter, EmrB, a periplasmic membrane fusion protein, EmrA, and an outer membrane component, TolC. The complex forms a large protein conduit and can translocate molecules across both the inner and outer membranes. Interacts with EmrB. EmrAB complex forms a dimer in vitro.

The protein resides in the cell inner membrane. Its function is as follows. Part of the tripartite efflux system EmrAB-TolC, which confers resistance to antibiotics such as CCCP, FCCP, 2,4-dinitrophenol and nalidixic acid. EmrA is a drug-binding protein that provides a physical link between EmrB and TolC. This Escherichia coli (strain K12) protein is Multidrug export protein EmrA (emrA).